A 259-amino-acid chain; its full sequence is Imidazole glycerol phosphate synthase subunit HisF (259 aa).

Catalysis depends on residues D11 and D130.

It belongs to the HisA/HisF family. As to quaternary structure, heterodimer of HisH and HisF.

It is found in the cytoplasm. It catalyses the reaction 5-[(5-phospho-1-deoxy-D-ribulos-1-ylimino)methylamino]-1-(5-phospho-beta-D-ribosyl)imidazole-4-carboxamide + L-glutamine = D-erythro-1-(imidazol-4-yl)glycerol 3-phosphate + 5-amino-1-(5-phospho-beta-D-ribosyl)imidazole-4-carboxamide + L-glutamate + H(+). It functions in the pathway amino-acid biosynthesis; L-histidine biosynthesis; L-histidine from 5-phospho-alpha-D-ribose 1-diphosphate: step 5/9. IGPS catalyzes the conversion of PRFAR and glutamine to IGP, AICAR and glutamate. The HisF subunit catalyzes the cyclization activity that produces IGP and AICAR from PRFAR using the ammonia provided by the HisH subunit. In Polaromonas sp. (strain JS666 / ATCC BAA-500), this protein is Imidazole glycerol phosphate synthase subunit HisF.